A 745-amino-acid polypeptide reads, in one-letter code: Copper-transporting ATPase (745 aa).

The HMA domain maps to 1 to 67 (MKESFYIEGM…LIEKLGYSPK (67 aa)). At 1–83 (MKESFYIEGM…KKEFFSPNVK (83 aa)) the chain is on the cytoplasmic side. 2 residues coordinate Cu cation: Cys12 and Cys15. The chain crosses the membrane as a helical span at residues 84–104 (LALAVIFTLFVVYLSMGAMLS). Residues 105-124 (PSLLPESLLTINHHSNFLNA) are Extracellular-facing. Residues 125–144 (CLQLIGALIVMHLGRDFYIQ) traverse the membrane as a helical segment. Residues 145–151 (GFKALWH) lie on the Cytoplasmic side of the membrane. A helical transmembrane segment spans residues 152–172 (RQPNMSSLIAIGTSAALISSL). At 173–194 (WQLYLVYTNHYTDQWSYGHYYF) the chain is on the extracellular side. Residues 195-215 (ESVCVILMFVMVGKRIENVSK) form a helical membrane-spanning segment. Topologically, residues 216–343 (DKALDAMQAL…KAEISRLADK (128 aa)) are cytoplasmic. Residues 344–366 (VSSVFVPSVIAIAVLAFVVWLII) traverse the membrane as a helical segment. Residues 367-379 (APKPDFWWNFRTA) lie on the Extracellular side of the membrane. A helical membrane pass occupies residues 380 to 397 (LEVFVSVLVISCPCALGL). Topologically, residues 398 to 685 (ATPMSILVAN…KLSQATIKNI (288 aa)) are cytoplasmic. Asp435 (4-aspartylphosphate intermediate) is an active-site residue. Mg(2+) is bound by residues Asp631 and Asp635. The helical transmembrane segment at 686-705 (KENLFWAFCYNSVFIPLACG) threads the bilayer. At 706 to 716 (VLYKANIMLSP) the chain is on the extracellular side. Residues 717–735 (AIAGLAMSLSSVSVVLNSQ) form a helical membrane-spanning segment. At 736 to 745 (RLRNFKIKDH) the chain is on the cytoplasmic side.

The protein belongs to the cation transport ATPase (P-type) (TC 3.A.3) family. Type IB subfamily.

It localises to the cell membrane. The catalysed reaction is Cu(2+)(in) + ATP + H2O = Cu(2+)(out) + ADP + phosphate + H(+). Probably involved in copper export. The protein is Copper-transporting ATPase (copA) of Helicobacter pylori (strain J99 / ATCC 700824) (Campylobacter pylori J99).